Consider the following 199-residue polypeptide: Charged multivesicular body protein 1b (199 aa).

Coiled-coil stretches lie at residues alanine 15–lysine 42 and threonine 178–valine 199. Residues glutamate 167–valine 199 are disordered. The span at glutamine 170–threonine 183 shows a compositional bias: polar residues. Positions aspartate 186–arginine 196 match the MIT-interacting motif motif.

The protein belongs to the SNF7 family.

The protein resides in the cytoplasm. It localises to the cytosol. Its subcellular location is the endosome. The protein localises to the late endosome membrane. Probable peripherally associated component of the endosomal sorting required for transport complex III (ESCRT-III) which is involved in multivesicular bodies (MVBs) formation and sorting of endosomal cargo proteins into MVBs. MVBs contain intraluminal vesicles (ILVs) that are generated by invagination and scission from the limiting membrane of the endosome and mostly are delivered to lysosomes enabling degradation of membrane proteins, such as stimulated growth factor receptors, lysosomal enzymes and lipids. This Xenopus tropicalis (Western clawed frog) protein is Charged multivesicular body protein 1b (chmp1b).